Reading from the N-terminus, the 201-residue chain is Imidazole glycerol phosphate synthase subunit HisH (201 aa).

Positions 1–201 constitute a Glutamine amidotransferase type-1 domain; the sequence is MIIVIDYDAG…ILKKFVDLCD (201 aa). Cys79 functions as the Nucleophile in the catalytic mechanism. Residues His181 and Glu183 contribute to the active site.

Heterodimer of HisH and HisF.

Its subcellular location is the cytoplasm. It catalyses the reaction 5-[(5-phospho-1-deoxy-D-ribulos-1-ylimino)methylamino]-1-(5-phospho-beta-D-ribosyl)imidazole-4-carboxamide + L-glutamine = D-erythro-1-(imidazol-4-yl)glycerol 3-phosphate + 5-amino-1-(5-phospho-beta-D-ribosyl)imidazole-4-carboxamide + L-glutamate + H(+). The catalysed reaction is L-glutamine + H2O = L-glutamate + NH4(+). It participates in amino-acid biosynthesis; L-histidine biosynthesis; L-histidine from 5-phospho-alpha-D-ribose 1-diphosphate: step 5/9. Functionally, IGPS catalyzes the conversion of PRFAR and glutamine to IGP, AICAR and glutamate. The HisH subunit catalyzes the hydrolysis of glutamine to glutamate and ammonia as part of the synthesis of IGP and AICAR. The resulting ammonia molecule is channeled to the active site of HisF. The chain is Imidazole glycerol phosphate synthase subunit HisH from Streptococcus mutans serotype c (strain ATCC 700610 / UA159).